The primary structure comprises 259 residues: L-ornithine N(alpha)-acyltransferase (259 aa).

This sequence belongs to the acetyltransferase family. OlsB subfamily.

The enzyme catalyses a (3R)-hydroxyacyl-[ACP] + L-ornithine = a lyso-ornithine lipid + holo-[ACP] + H(+). It participates in lipid metabolism. Its function is as follows. Catalyzes the first step in the biosynthesis of ornithine lipids, which are phosphorus-free membrane lipids. Catalyzes the 3-hydroxyacyl-acyl carrier protein-dependent acylation of ornithine to form lyso-ornithine lipid (LOL). This chain is L-ornithine N(alpha)-acyltransferase, found in Rhodobacter capsulatus (strain ATCC BAA-309 / NBRC 16581 / SB1003).